Reading from the N-terminus, the 212-residue chain is Octanoyltransferase (212 aa).

One can recognise a BPL/LPL catalytic domain in the interval E30–Q205. Substrate contacts are provided by residues R69 to H76, S136 to G138, and G149 to A151. C167 acts as the Acyl-thioester intermediate in catalysis.

Belongs to the LipB family.

It is found in the cytoplasm. It catalyses the reaction octanoyl-[ACP] + L-lysyl-[protein] = N(6)-octanoyl-L-lysyl-[protein] + holo-[ACP] + H(+). It participates in protein modification; protein lipoylation via endogenous pathway; protein N(6)-(lipoyl)lysine from octanoyl-[acyl-carrier-protein]: step 1/2. Catalyzes the transfer of endogenously produced octanoic acid from octanoyl-acyl-carrier-protein onto the lipoyl domains of lipoate-dependent enzymes. Lipoyl-ACP can also act as a substrate although octanoyl-ACP is likely to be the physiological substrate. The polypeptide is Octanoyltransferase (Marinobacter nauticus (strain ATCC 700491 / DSM 11845 / VT8) (Marinobacter aquaeolei)).